The primary structure comprises 227 residues: dTTP/UTP pyrophosphatase (227 aa).

Residue Asp98 is the Proton acceptor of the active site.

This sequence belongs to the Maf family. YhdE subfamily. A divalent metal cation is required as a cofactor.

The protein resides in the cytoplasm. The catalysed reaction is dTTP + H2O = dTMP + diphosphate + H(+). The enzyme catalyses UTP + H2O = UMP + diphosphate + H(+). In terms of biological role, nucleoside triphosphate pyrophosphatase that hydrolyzes dTTP and UTP. May have a dual role in cell division arrest and in preventing the incorporation of modified nucleotides into cellular nucleic acids. The protein is dTTP/UTP pyrophosphatase of Bartonella quintana (strain Toulouse) (Rochalimaea quintana).